Consider the following 272-residue polypeptide: 3-methyl-2-oxobutanoate hydroxymethyltransferase (272 aa).

Mg(2+)-binding residues include Asp-51 and Asp-90. 3-methyl-2-oxobutanoate is bound by residues 51–52 (DS), Asp-90, and Lys-119. Residue Glu-121 participates in Mg(2+) binding. Catalysis depends on Glu-188, which acts as the Proton acceptor.

Belongs to the PanB family. In terms of assembly, homodecamer; pentamer of dimers. It depends on Mg(2+) as a cofactor.

The protein localises to the cytoplasm. The catalysed reaction is 3-methyl-2-oxobutanoate + (6R)-5,10-methylene-5,6,7,8-tetrahydrofolate + H2O = 2-dehydropantoate + (6S)-5,6,7,8-tetrahydrofolate. The protein operates within cofactor biosynthesis; (R)-pantothenate biosynthesis; (R)-pantoate from 3-methyl-2-oxobutanoate: step 1/2. Its function is as follows. Catalyzes the reversible reaction in which hydroxymethyl group from 5,10-methylenetetrahydrofolate is transferred onto alpha-ketoisovalerate to form ketopantoate. The sequence is that of 3-methyl-2-oxobutanoate hydroxymethyltransferase from Dechloromonas aromatica (strain RCB).